The sequence spans 270 residues: Tryptophan synthase alpha chain (270 aa).

Catalysis depends on proton acceptor residues glutamate 51 and aspartate 62.

The protein belongs to the TrpA family. In terms of assembly, tetramer of two alpha and two beta chains.

It carries out the reaction (1S,2R)-1-C-(indol-3-yl)glycerol 3-phosphate + L-serine = D-glyceraldehyde 3-phosphate + L-tryptophan + H2O. It functions in the pathway amino-acid biosynthesis; L-tryptophan biosynthesis; L-tryptophan from chorismate: step 5/5. The alpha subunit is responsible for the aldol cleavage of indoleglycerol phosphate to indole and glyceraldehyde 3-phosphate. This Methanothermobacter thermautotrophicus (strain ATCC 29096 / DSM 1053 / JCM 10044 / NBRC 100330 / Delta H) (Methanobacterium thermoautotrophicum) protein is Tryptophan synthase alpha chain.